The primary structure comprises 252 residues: ATP synthase subunit a (252 aa).

Transmembrane regions (helical) follow at residues 33–53 (GQVF…AFVA), 92–112 (VPFV…GALV), 130–150 (DINT…YAGL), 196–216 (LVVS…VMVL), and 217–237 (GLFT…TYIG).

The protein belongs to the ATPase A chain family. As to quaternary structure, F-type ATPases have 2 components, CF(1) - the catalytic core - and CF(0) - the membrane proton channel. CF(1) has five subunits: alpha(3), beta(3), gamma(1), delta(1), epsilon(1). CF(0) has four main subunits: a, b, b' and c.

It localises to the cellular thylakoid membrane. Its function is as follows. Key component of the proton channel; it plays a direct role in the translocation of protons across the membrane. The sequence is that of ATP synthase subunit a from Thermosynechococcus vestitus (strain NIES-2133 / IAM M-273 / BP-1).